Consider the following 905-residue polypeptide: Protein LONGIFOLIA 2 (905 aa).

Disordered regions lie at residues 42-136 (VSGG…GGLM), 232-268 (RLSL…RSSS), 285-315 (DTEQ…SRSV), 432-585 (STSP…SDSN), 606-626 (CDFP…IKQD), and 690-711 (VPFP…ECSP). The span at 65–74 (ESDKETERSS) shows a compositional bias: basic and acidic residues. The span at 90 to 117 (FESSSRPSFSSSPRSSSFSSAEVSTTAS) shows a compositional bias: low complexity. The span at 286–296 (TEQRRENRFCD) shows a compositional bias: basic and acidic residues. 3 stretches are compositionally biased toward polar residues: residues 432–461 (STSP…SGKQ), 477–487 (LDSTKSNSPKT), and 501–516 (MTKS…SPRT). The segment covering 566–581 (PDDRLSDARSDLRSLR) has biased composition (basic and acidic residues).

Interacts (via C-terminus) with TON1A and TON1B.

The protein resides in the cytoplasm. It is found in the cytoskeleton. In terms of biological role, in association with LNG1, regulates leaf morphology by promoting longitudinal polar cell elongation independently of ROT3. Associates with microtubules and recruits TON1A and TON1B to the cytoskeleton through its C-terminus. This Arabidopsis thaliana (Mouse-ear cress) protein is Protein LONGIFOLIA 2 (LNG2).